A 274-amino-acid chain; its full sequence is 2,3,4,5-tetrahydropyridine-2,6-dicarboxylate N-succinyltransferase (274 aa).

It belongs to the transferase hexapeptide repeat family.

Its subcellular location is the cytoplasm. The enzyme catalyses (S)-2,3,4,5-tetrahydrodipicolinate + succinyl-CoA + H2O = (S)-2-succinylamino-6-oxoheptanedioate + CoA. Its pathway is amino-acid biosynthesis; L-lysine biosynthesis via DAP pathway; LL-2,6-diaminopimelate from (S)-tetrahydrodipicolinate (succinylase route): step 1/3. The chain is 2,3,4,5-tetrahydropyridine-2,6-dicarboxylate N-succinyltransferase from Yersinia pseudotuberculosis serotype IB (strain PB1/+).